We begin with the raw amino-acid sequence, 120 residues long: Large ribosomal subunit protein uL18 (120 aa).

Belongs to the universal ribosomal protein uL18 family. Part of the 50S ribosomal subunit; part of the 5S rRNA/L5/L18/L25 subcomplex. Contacts the 5S and 23S rRNAs.

Functionally, this is one of the proteins that bind and probably mediate the attachment of the 5S RNA into the large ribosomal subunit, where it forms part of the central protuberance. This is Large ribosomal subunit protein uL18 from Methylobacterium nodulans (strain LMG 21967 / CNCM I-2342 / ORS 2060).